We begin with the raw amino-acid sequence, 508 residues long: DNA-directed RNA polymerase subunit Rpo1C (508 aa).

The unknown stretch occupies residues 1–123; it reads MASLLWRDTS…EIKEKYGENL (123 aa). A DNA-directed RNA polymerase subunit Rpo1C region spans residues 124-508; it reads SEDVQKVLDD…IYKGYPKTKK (385 aa).

The protein belongs to the RNA polymerase beta' chain family. Part of the RNA polymerase complex.

It is found in the cytoplasm. It catalyses the reaction RNA(n) + a ribonucleoside 5'-triphosphate = RNA(n+1) + diphosphate. Functionally, DNA-dependent RNA polymerase (RNAP) catalyzes the transcription of DNA into RNA using the four ribonucleoside triphosphates as substrates. Forms part of the jaw domain. The sequence is that of DNA-directed RNA polymerase subunit Rpo1C from Thermoplasma acidophilum (strain ATCC 25905 / DSM 1728 / JCM 9062 / NBRC 15155 / AMRC-C165).